We begin with the raw amino-acid sequence, 72 residues long: Large ribosomal subunit protein bL31 (72 aa).

The protein belongs to the bacterial ribosomal protein bL31 family. Type A subfamily. Part of the 50S ribosomal subunit.

Binds the 23S rRNA. The chain is Large ribosomal subunit protein bL31 from Deinococcus geothermalis (strain DSM 11300 / CIP 105573 / AG-3a).